The following is a 327-amino-acid chain: Methionyl-tRNA formyltransferase (327 aa).

122–125 provides a ligand contact to (6S)-5,6,7,8-tetrahydrofolate; sequence SLLP.

This sequence belongs to the Fmt family.

It carries out the reaction L-methionyl-tRNA(fMet) + (6R)-10-formyltetrahydrofolate = N-formyl-L-methionyl-tRNA(fMet) + (6S)-5,6,7,8-tetrahydrofolate + H(+). In terms of biological role, attaches a formyl group to the free amino group of methionyl-tRNA(fMet). The formyl group appears to play a dual role in the initiator identity of N-formylmethionyl-tRNA by promoting its recognition by IF2 and preventing the misappropriation of this tRNA by the elongation apparatus. This Ralstonia pickettii (strain 12J) protein is Methionyl-tRNA formyltransferase.